The primary structure comprises 390 residues: LL-diaminopimelate aminotransferase 2 (390 aa).

Substrate is bound by residues tyrosine 13 and glycine 38. Pyridoxal 5'-phosphate contacts are provided by residues tyrosine 67, 102-103, tyrosine 127, asparagine 177, tyrosine 208, and 236-238; these read SK and SLS. The substrate site is built by lysine 103, tyrosine 127, and asparagine 177. Position 239 is an N6-(pyridoxal phosphate)lysine (lysine 239). Arginine 247 lines the pyridoxal 5'-phosphate pocket. Arginine 365 is a binding site for substrate.

Belongs to the class-I pyridoxal-phosphate-dependent aminotransferase family. LL-diaminopimelate aminotransferase subfamily. Homodimer. It depends on pyridoxal 5'-phosphate as a cofactor.

It catalyses the reaction (2S,6S)-2,6-diaminopimelate + 2-oxoglutarate = (S)-2,3,4,5-tetrahydrodipicolinate + L-glutamate + H2O + H(+). Its pathway is amino-acid biosynthesis; L-lysine biosynthesis via DAP pathway; LL-2,6-diaminopimelate from (S)-tetrahydrodipicolinate (aminotransferase route): step 1/1. Its function is as follows. Involved in the synthesis of meso-diaminopimelate (m-DAP or DL-DAP), required for both lysine and peptidoglycan biosynthesis. Catalyzes the direct conversion of tetrahydrodipicolinate to LL-diaminopimelate. The protein is LL-diaminopimelate aminotransferase 2 of Trichormus variabilis (strain ATCC 29413 / PCC 7937) (Anabaena variabilis).